The primary structure comprises 1333 residues: Vascular endothelial growth factor receptor 1 (1333 aa).

The signal sequence occupies residues 1 to 22 (MVSCWDTAVLPYALLGCLLLTG). The Extracellular portion of the chain corresponds to 23-759 (YGSGSKLKVP…QGTSDKSNLE (737 aa)). Ig-like C2-type domains follow at residues 32-124 (PELS…AESS), 152-215 (GRQL…VNGH), 231-328 (LDVQ…TSVH), 334-429 (FISV…NVKP), 430-550 (QIYE…RNIK), 557-656 (PNGF…EVLV), and 662-748 (PHLL…AYLT). Disulfide bonds link cysteine 53/cysteine 108 and cysteine 159/cysteine 208. N-linked (GlcNAc...) asparagine glycans are attached at residues asparagine 101, asparagine 165, asparagine 197, and asparagine 252. Cysteine 253 and cysteine 312 form a disulfide bridge. N-linked (GlcNAc...) asparagine glycans are attached at residues asparagine 324, asparagine 418, asparagine 475, asparagine 517, asparagine 598, asparagine 626, asparagine 667, and asparagine 714. 2 disulfide bridges follow: cysteine 455/cysteine 536 and cysteine 578/cysteine 637. A disulfide bridge connects residues cysteine 683 and cysteine 732. The chain crosses the membrane as a helical span at residues 760–781 (LITLTCTCVAATLFWLLLTLFI). Over 782–1333 (RKLKRSSSEV…SVVLYSSPPA (552 aa)) the chain is Cytoplasmic. The region spanning 828-1158 (LKLGKSLGRG…ELVEKLGDLL (331 aa)) is the Protein kinase domain. ATP is bound by residues 834–842 (LGRGAFGKV) and lysine 862. Tyrosine 915 is modified (phosphotyrosine; by autocatalysis). The segment at 947 to 983 (EPGLEQGQKPRLDSVSSSSVTSSSFPEDRSVSDVEGD) is disordered. Low complexity predominate over residues 960 to 970 (SVSSSSVTSSS). Residue aspartate 1022 is the Proton acceptor of the active site. Tyrosine 1053, tyrosine 1169, tyrosine 1213, tyrosine 1242, tyrosine 1322, and tyrosine 1328 each carry phosphotyrosine; by autocatalysis.

This sequence belongs to the protein kinase superfamily. Tyr protein kinase family. CSF-1/PDGF receptor subfamily. Interacts with VEGFA, VEGFB and PGF. Monomer in the absence of bound VEGFA, VEGFB or PGF. Homodimer in the presence of bound VEGFA, VEGFB and PGF. Can also form a heterodimer with KDR. Interacts (tyrosine phosphorylated) with CBL, CRK, GRB2, NCK1, PIK3R1, PLCG, PSEN1 and PTPN11. Probably interacts with PTPRB. Interacts with RACK1. Identified in a complex with CBL and CD2AP. In terms of processing, N-glycosylated. Post-translationally, ubiquitinated after VEGFA-mediated autophosphorylation, leading to proteolytic degradation. Autophosphorylated on tyrosine residues upon ligand binding. Autophosphorylation occurs in trans, i.e. one subunit of the dimeric receptor phosphorylates tyrosine residues on the other subunit. Phosphorylation at Tyr-1169 is important for interaction with PLCG. Phosphorylation at Tyr-1213 is important for interaction with PIK3R1, PTPN11, GRB2, and PLCG. Phosphorylation at Tyr-1328 is important for endocytosis and for interaction with CBL, NCK1 and CRK. Is probably dephosphorylated by PTPRB.

It localises to the cell membrane. Its subcellular location is the endosome. The catalysed reaction is L-tyrosyl-[protein] + ATP = O-phospho-L-tyrosyl-[protein] + ADP + H(+). Present in an inactive conformation in the absence of bound ligand. Binding of VEGFA, VEGFB or PGF leads to dimerization and activation by autophosphorylation on tyrosine residues. Its function is as follows. Tyrosine-protein kinase that acts as a cell-surface receptor for VEGFA, VEGFB and PGF, and plays an essential role in the development of embryonic vasculature, the regulation of angiogenesis, cell survival, cell migration, macrophage function, chemotaxis, and cancer cell invasion. Acts as a positive regulator of postnatal retinal hyaloid vessel regression. May play an essential role as a negative regulator of embryonic angiogenesis by inhibiting excessive proliferation of endothelial cells. Can promote endothelial cell proliferation, survival and angiogenesis in adulthood. Its function in promoting cell proliferation seems to be cell-type specific. Promotes PGF-mediated proliferation of endothelial cells, and proliferation of some types of cancer cells, but does not promote proliferation of normal fibroblasts. Has very high affinity for VEGFA and relatively low protein kinase activity; may function as a negative regulator of VEGFA signaling by limiting the amount of free VEGFA and preventing its binding to KDR. Modulates KDR signaling by forming heterodimers with KDR. Ligand binding leads to the activation of several signaling cascades. Activation of PLCG leads to the production of the cellular signaling molecules diacylglycerol and inositol 1,4,5-trisphosphate and the activation of protein kinase C. Mediates phosphorylation of PIK3R1, the regulatory subunit of phosphatidylinositol 3-kinase, leading to the activation of phosphatidylinositol kinase and the downstream signaling pathway. Mediates activation of MAPK1/ERK2, MAPK3/ERK1 and the MAP kinase signaling pathway, as well as of the AKT1 signaling pathway. Phosphorylates SRC, YES1 and PLCG, and may also phosphorylate CBL. Promotes phosphorylation of AKT1 and PTK2/FAK1. This is Vascular endothelial growth factor receptor 1 (Flt1) from Mus musculus (Mouse).